We begin with the raw amino-acid sequence, 123 residues long: uncharacterized protein (123 aa).

The span at 31-57 (KLRTEAKKSKDKERTKEKEKHESLAKE) shows a compositional bias: basic and acidic residues. The interval 31 to 58 (KLRTEAKKSKDKERTKEKEKHESLAKEK) is disordered. Residues 91-111 (IIIFLLILLVSGLMVGIFFGI) form a helical membrane-spanning segment.

It localises to the membrane. This is an uncharacterized protein from Mycoplasma genitalium (strain ATCC 33530 / DSM 19775 / NCTC 10195 / G37) (Mycoplasmoides genitalium).